Reading from the N-terminus, the 104-residue chain is Co-chaperonin GroES 3 (104 aa).

The protein belongs to the GroES chaperonin family. As to quaternary structure, heptamer of 7 subunits arranged in a ring. Interacts with the chaperonin GroEL.

The protein localises to the cytoplasm. In terms of biological role, together with the chaperonin GroEL, plays an essential role in assisting protein folding. The GroEL-GroES system forms a nano-cage that allows encapsulation of the non-native substrate proteins and provides a physical environment optimized to promote and accelerate protein folding. GroES binds to the apical surface of the GroEL ring, thereby capping the opening of the GroEL channel. This Bradyrhizobium diazoefficiens (strain JCM 10833 / BCRC 13528 / IAM 13628 / NBRC 14792 / USDA 110) protein is Co-chaperonin GroES 3.